The following is a 313-amino-acid chain: D-alanine--D-alanine ligase (313 aa).

The ATP-grasp domain maps to Lys108–Ser308. Val138 to Tyr193 serves as a coordination point for ATP. 3 residues coordinate Mg(2+): Asp262, Glu275, and Asn277.

Belongs to the D-alanine--D-alanine ligase family. Requires Mg(2+) as cofactor. Mn(2+) is required as a cofactor.

The protein resides in the cytoplasm. It catalyses the reaction 2 D-alanine + ATP = D-alanyl-D-alanine + ADP + phosphate + H(+). It participates in cell wall biogenesis; peptidoglycan biosynthesis. In terms of biological role, cell wall formation. The chain is D-alanine--D-alanine ligase from Burkholderia orbicola (strain MC0-3).